Reading from the N-terminus, the 100-residue chain is Mitochondrial import inner membrane translocase subunit Tim10 B (100 aa).

A Twin CX3C motif motif is present at residues 25 to 49 (CFQRCVPSLHHRALDAEEEACLHSC). 2 disulfide bridges follow: Cys25-Cys49 and Cys29-Cys45.

The protein belongs to the small Tim family. In terms of assembly, component of the TIM22 complex, which core is composed of TIMM22, associated with TIMM10 (TIMM10A and/or TIMM10B), TIMM9, AGK and TIMM29.

The protein resides in the mitochondrion inner membrane. Component of the TIM22 complex, a complex that mediates the import and insertion of multi-pass transmembrane proteins into the mitochondrial inner membrane. The TIM22 complex forms a twin-pore translocase that uses the membrane potential as the external driving force. In the TIM22 complex, it may act as a docking point for the soluble 70 kDa complex that guides the target proteins in transit through the aqueous mitochondrial intermembrane space. In Mus musculus (Mouse), this protein is Mitochondrial import inner membrane translocase subunit Tim10 B (Timm10b).